The following is a 219-amino-acid chain: Suppressor-of-stellate-like protein (219 aa).

Positions 194-219 (SAESPPIKVESSVSKSPSWLRNVPNF) are disordered. Residues 204–219 (SSVSKSPSWLRNVPNF) show a composition bias toward polar residues.

It belongs to the casein kinase 2 subunit beta family.

The sequence is that of Suppressor-of-stellate-like protein (Ssl) from Drosophila melanogaster (Fruit fly).